The following is a 274-amino-acid chain: 3-methyl-2-oxobutanoate hydroxymethyltransferase (274 aa).

Asp-49 and Asp-88 together coordinate Mg(2+). Residues 49-50, Asp-88, and Lys-118 each bind 3-methyl-2-oxobutanoate; that span reads DS. Glu-120 contacts Mg(2+). The active-site Proton acceptor is Glu-187.

Belongs to the PanB family. As to quaternary structure, homodecamer; pentamer of dimers. Mg(2+) serves as cofactor.

Its subcellular location is the cytoplasm. The enzyme catalyses 3-methyl-2-oxobutanoate + (6R)-5,10-methylene-5,6,7,8-tetrahydrofolate + H2O = 2-dehydropantoate + (6S)-5,6,7,8-tetrahydrofolate. Its pathway is cofactor biosynthesis; (R)-pantothenate biosynthesis; (R)-pantoate from 3-methyl-2-oxobutanoate: step 1/2. Its function is as follows. Catalyzes the reversible reaction in which hydroxymethyl group from 5,10-methylenetetrahydrofolate is transferred onto alpha-ketoisovalerate to form ketopantoate. This Rhodopseudomonas palustris (strain ATCC BAA-98 / CGA009) protein is 3-methyl-2-oxobutanoate hydroxymethyltransferase.